The following is a 606-amino-acid chain: Threonine--tRNA ligase (606 aa).

The segment at 212 to 503 (DHRKLGVEMK…LLEHTAGELP (292 aa)) is catalytic. Residues C304, H355, and H480 each contribute to the Zn(2+) site.

This sequence belongs to the class-II aminoacyl-tRNA synthetase family. In terms of assembly, homodimer. Zn(2+) serves as cofactor.

It is found in the cytoplasm. It carries out the reaction tRNA(Thr) + L-threonine + ATP = L-threonyl-tRNA(Thr) + AMP + diphosphate + H(+). In terms of biological role, catalyzes the attachment of threonine to tRNA(Thr) in a two-step reaction: L-threonine is first activated by ATP to form Thr-AMP and then transferred to the acceptor end of tRNA(Thr). Also edits incorrectly charged L-seryl-tRNA(Thr). This is Threonine--tRNA ligase from Campylobacter concisus (strain 13826).